Here is a 346-residue protein sequence, read N- to C-terminus: UPF0065 protein in the TAR-I ttuE-ttuC' intergenic region (346 aa).

Positions 1–46 (MQASMLDSQWRLTIFSPRRKVKVSQMNSRFIAVLLTATILPWVAQA) are cleaved as a signal peptide.

This sequence belongs to the UPF0065 (bug) family.

It is found in the periplasm. The polypeptide is UPF0065 protein in the TAR-I ttuE-ttuC' intergenic region (Agrobacterium vitis (Rhizobium vitis)).